A 432-amino-acid chain; its full sequence is Glutamate-1-semialdehyde 2,1-aminomutase (432 aa).

Lys265 carries the post-translational modification N6-(pyridoxal phosphate)lysine.

It belongs to the class-III pyridoxal-phosphate-dependent aminotransferase family. HemL subfamily. As to quaternary structure, homodimer. The cofactor is pyridoxal 5'-phosphate.

It localises to the cytoplasm. It carries out the reaction (S)-4-amino-5-oxopentanoate = 5-aminolevulinate. Its pathway is porphyrin-containing compound metabolism; protoporphyrin-IX biosynthesis; 5-aminolevulinate from L-glutamyl-tRNA(Glu): step 2/2. The protein is Glutamate-1-semialdehyde 2,1-aminomutase of Histophilus somni (strain 2336) (Haemophilus somnus).